The sequence spans 271 residues: Purine nucleoside phosphorylase 1 (271 aa).

Phosphate is bound by residues Ser28, His59, 79–81, and Ala111; that span reads RFH. Ser28 is subject to Phosphoserine. Residue Glu191 coordinates a purine D-ribonucleoside. Ser210 lines the phosphate pocket. An a purine D-ribonucleoside-binding site is contributed by Asn233.

This sequence belongs to the PNP/MTAP phosphorylase family. In terms of assembly, homotrimer.

The enzyme catalyses a purine 2'-deoxy-D-ribonucleoside + phosphate = a purine nucleobase + 2-deoxy-alpha-D-ribose 1-phosphate. Its pathway is purine metabolism; purine nucleoside salvage. In terms of biological role, the purine nucleoside phosphorylases catalyze the phosphorolytic breakdown of the N-glycosidic bond in the beta-(deoxy)ribonucleoside molecules, with the formation of the corresponding free purine bases and pentose-1-phosphate. Cleaves guanosine, inosine, 2'-deoxyguanosine and 2'-deoxyinosine. The chain is Purine nucleoside phosphorylase 1 (punA) from Bacillus subtilis (strain 168).